Here is a 374-residue protein sequence, read N- to C-terminus: Probable aminopeptidase YDR415C (374 aa).

A signal peptide spans 1-18; the sequence is MRIQSLFVLFNVAIIAWS. Zn(2+) is bound by residues H177, D196, E235, D262, and H340.

The protein belongs to the peptidase M28 family. M28E subfamily. The cofactor is Zn(2+).

The sequence is that of Probable aminopeptidase YDR415C from Saccharomyces cerevisiae (strain ATCC 204508 / S288c) (Baker's yeast).